Reading from the N-terminus, the 280-residue chain is Ribosomal RNA small subunit methyltransferase A (280 aa).

Residues L24, G49, E70, D95, and N118 each contribute to the S-adenosyl-L-methionine site.

Belongs to the class I-like SAM-binding methyltransferase superfamily. rRNA adenine N(6)-methyltransferase family. RsmA subfamily.

The protein resides in the cytoplasm. The catalysed reaction is adenosine(1518)/adenosine(1519) in 16S rRNA + 4 S-adenosyl-L-methionine = N(6)-dimethyladenosine(1518)/N(6)-dimethyladenosine(1519) in 16S rRNA + 4 S-adenosyl-L-homocysteine + 4 H(+). Functionally, specifically dimethylates two adjacent adenosines (A1518 and A1519) in the loop of a conserved hairpin near the 3'-end of 16S rRNA in the 30S particle. May play a critical role in biogenesis of 30S subunits. This is Ribosomal RNA small subunit methyltransferase A from Syntrophus aciditrophicus (strain SB).